We begin with the raw amino-acid sequence, 68 residues long: Conotoxin ba14a (68 aa).

The first 20 residues, 1–20, serve as a signal peptide directing secretion; the sequence is MKLSVMFIVALVLSLSMTDG. A propeptide spanning residues 21–50 is cleaved from the precursor; sequence LPRRAENGGRIFRQHSPDSMDPQTRQIKTR.

Post-translationally, contains 2 disulfide bonds. In terms of tissue distribution, expressed by the venom duct.

The protein resides in the secreted. The protein is Conotoxin ba14a of Conus bayani (Bayan's cone).